Consider the following 1197-residue polypeptide: DNA-directed RNA polymerase subunit beta (1197 aa).

This sequence belongs to the RNA polymerase beta chain family. In terms of assembly, the RNAP catalytic core consists of 2 alpha, 1 beta, 1 beta' and 1 omega subunit. When a sigma factor is associated with the core the holoenzyme is formed, which can initiate transcription.

The catalysed reaction is RNA(n) + a ribonucleoside 5'-triphosphate = RNA(n+1) + diphosphate. Its function is as follows. DNA-dependent RNA polymerase catalyzes the transcription of DNA into RNA using the four ribonucleoside triphosphates as substrates. This Streptococcus pyogenes serotype M12 (strain MGAS9429) protein is DNA-directed RNA polymerase subunit beta.